A 448-amino-acid polypeptide reads, in one-letter code: Ribosomal protein uS12 methylthiotransferase RimO (448 aa).

One can recognise an MTTase N-terminal domain in the interval 6–116 (PKVGIVSLGC…VVEAVHAAIP (111 aa)). 6 residues coordinate [4Fe-4S] cluster: Cys15, Cys51, Cys80, Cys147, Cys151, and Cys154. One can recognise a Radical SAM core domain in the interval 133-371 (LTPHHYAYLK…EAARQIADER (239 aa)). A TRAM domain is found at 373-439 (AAKEGTRIEV…DYDLWGDVVE (67 aa)).

Belongs to the methylthiotransferase family. RimO subfamily. Requires [4Fe-4S] cluster as cofactor.

It localises to the cytoplasm. The enzyme catalyses L-aspartate(89)-[ribosomal protein uS12]-hydrogen + (sulfur carrier)-SH + AH2 + 2 S-adenosyl-L-methionine = 3-methylsulfanyl-L-aspartate(89)-[ribosomal protein uS12]-hydrogen + (sulfur carrier)-H + 5'-deoxyadenosine + L-methionine + A + S-adenosyl-L-homocysteine + 2 H(+). Its function is as follows. Catalyzes the methylthiolation of an aspartic acid residue of ribosomal protein uS12. The polypeptide is Ribosomal protein uS12 methylthiotransferase RimO (Paramagnetospirillum magneticum (strain ATCC 700264 / AMB-1) (Magnetospirillum magneticum)).